Reading from the N-terminus, the 327-residue chain is GMP reductase (327 aa).

The active-site Thioimidate intermediate is the C176. I205–V228 lines the NADP(+) pocket.

The protein belongs to the IMPDH/GMPR family. GuaC type 2 subfamily.

It catalyses the reaction IMP + NH4(+) + NADP(+) = GMP + NADPH + 2 H(+). Functionally, catalyzes the irreversible NADPH-dependent deamination of GMP to IMP. It functions in the conversion of nucleobase, nucleoside and nucleotide derivatives of G to A nucleotides, and in maintaining the intracellular balance of A and G nucleotides. The sequence is that of GMP reductase from Streptococcus pyogenes serotype M1.